We begin with the raw amino-acid sequence, 934 residues long: UPF0182 protein sync_1321 (934 aa).

A run of 9 helical transmembrane segments spans residues 2–22 (AKII…IVII), 45–65 (LLLQ…CALW), 86–106 (GYRY…VLAI), 129–149 (FSTG…IMFG), 165–185 (VCIC…FSIP), 208–228 (IAFG…TALW), 251–271 (HGLR…MWLS), 300–320 (LGSI…FSSV), and 327–347 (LILA…FPLM).

The protein belongs to the UPF0182 family.

The protein localises to the cell membrane. The polypeptide is UPF0182 protein sync_1321 (Synechococcus sp. (strain CC9311)).